Here is a 723-residue protein sequence, read N- to C-terminus: Zinc finger protein 750 (723 aa).

A CCHC-type zinc finger spans residues 25 to 51 (YKCFQCPFTCNEKSHLFNHMKYGLCKN). The Zn(2+) site is built by cysteine 27, cysteine 30, histidine 43, and cysteine 49. Disordered regions lie at residues 64–91 (KCPK…SKSV), 132–153 (LHRA…QPAL), 359–427 (ASSP…SQTC), 466–630 (PAQA…SEEQ), and 650–723 (RVGD…ARVS). Residues 67-91 (KSNSLDPKQTNQPDATAKPASSKSV) show a composition bias toward polar residues. The segment covering 360-369 (SSPSRLNPSD) has biased composition (polar residues). Positions 370-397 (PNRKHVEFESPIPEAKDSSKAGQRDTEG) are enriched in basic and acidic residues. Polar residues predominate over residues 470 to 482 (AETTAESPVSLNV). Over residues 500 to 509 (AAPSSPDDSS) the composition is skewed to low complexity. The segment covering 530–545 (PTYQGSPQAETASFSE) has biased composition (polar residues). 2 stretches are compositionally biased toward low complexity: residues 563-582 (APRP…AAVP) and 606-616 (GDGAPPTGPGE). Residues 666–678 (DTPTLSSMESQEA) are compositionally biased toward polar residues.

Expressed in the skin, prostate, lung, placenta and thymus, and at low level in T-cells. Not expressed in peripheral blood leukocytes, pancreas and brain. Clearly expressed in primary keratinocytes but not in fibroblasts.

It localises to the nucleus. Its function is as follows. Transcription factor involved in epidermis differentiation. Required for terminal epidermal differentiation: acts downstream of p63/TP63 and activates expression of late epidermal differentiation genes. Specifically binds to the promoter of KLF4 and promotes its expression. The polypeptide is Zinc finger protein 750 (ZNF750) (Homo sapiens (Human)).